The sequence spans 189 residues: ATP synthase subunit b (189 aa).

Residues 38–58 form a helical membrane-spanning segment; the sequence is PMFLATLIAFILVVLILWFLL.

The protein belongs to the ATPase B chain family. As to quaternary structure, F-type ATPases have 2 components, F(1) - the catalytic core - and F(0) - the membrane proton channel. F(1) has five subunits: alpha(3), beta(3), gamma(1), delta(1), epsilon(1). F(0) has three main subunits: a(1), b(2) and c(10-14). The alpha and beta chains form an alternating ring which encloses part of the gamma chain. F(1) is attached to F(0) by a central stalk formed by the gamma and epsilon chains, while a peripheral stalk is formed by the delta and b chains.

The protein localises to the cell membrane. F(1)F(0) ATP synthase produces ATP from ADP in the presence of a proton or sodium gradient. F-type ATPases consist of two structural domains, F(1) containing the extramembraneous catalytic core and F(0) containing the membrane proton channel, linked together by a central stalk and a peripheral stalk. During catalysis, ATP synthesis in the catalytic domain of F(1) is coupled via a rotary mechanism of the central stalk subunits to proton translocation. In terms of biological role, component of the F(0) channel, it forms part of the peripheral stalk, linking F(1) to F(0). In Mycoplasmopsis agalactiae (strain NCTC 10123 / CIP 59.7 / PG2) (Mycoplasma agalactiae), this protein is ATP synthase subunit b.